The primary structure comprises 141 residues: Aspartate 1-decarboxylase (141 aa).

The active-site Schiff-base intermediate with substrate; via pyruvic acid is Ser25. Pyruvic acid (Ser) is present on Ser25. Thr57 is a substrate binding site. Residue Tyr58 is the Proton donor of the active site. Gly73–Ala75 provides a ligand contact to substrate.

This sequence belongs to the PanD family. As to quaternary structure, heterooctamer of four alpha and four beta subunits. Pyruvate serves as cofactor. Is synthesized initially as an inactive proenzyme, which is activated by self-cleavage at a specific serine bond to produce a beta-subunit with a hydroxyl group at its C-terminus and an alpha-subunit with a pyruvoyl group at its N-terminus.

Its subcellular location is the cytoplasm. It carries out the reaction L-aspartate + H(+) = beta-alanine + CO2. The protein operates within cofactor biosynthesis; (R)-pantothenate biosynthesis; beta-alanine from L-aspartate: step 1/1. Functionally, catalyzes the pyruvoyl-dependent decarboxylation of aspartate to produce beta-alanine. This Pseudarthrobacter chlorophenolicus (strain ATCC 700700 / DSM 12829 / CIP 107037 / JCM 12360 / KCTC 9906 / NCIMB 13794 / A6) (Arthrobacter chlorophenolicus) protein is Aspartate 1-decarboxylase.